The primary structure comprises 248 residues: Ubiquinone biosynthesis O-methyltransferase (248 aa).

4 residues coordinate S-adenosyl-L-methionine: Arg-41, Gly-72, Asp-93, and Met-136.

Belongs to the methyltransferase superfamily. UbiG/COQ3 family.

The enzyme catalyses a 3-demethylubiquinol + S-adenosyl-L-methionine = a ubiquinol + S-adenosyl-L-homocysteine + H(+). It carries out the reaction a 3-(all-trans-polyprenyl)benzene-1,2-diol + S-adenosyl-L-methionine = a 2-methoxy-6-(all-trans-polyprenyl)phenol + S-adenosyl-L-homocysteine + H(+). It functions in the pathway cofactor biosynthesis; ubiquinone biosynthesis. In terms of biological role, O-methyltransferase that catalyzes the 2 O-methylation steps in the ubiquinone biosynthetic pathway. This chain is Ubiquinone biosynthesis O-methyltransferase, found in Bartonella bacilliformis (strain ATCC 35685 / KC583 / Herrer 020/F12,63).